The primary structure comprises 130 residues: Fumarate reductase subunit C (130 aa).

3 helical membrane-spanning segments follow: residues 34–54, 60–80, and 109–129; these read VPAV…KGGV, FVGF…LLAA, and IVKT…AVAL.

The protein belongs to the FrdC family. In terms of assembly, part of an enzyme complex containing four subunits: a flavoprotein (FrdA), an iron-sulfur protein (FrdB), and two hydrophobic anchor proteins (FrdC and FrdD).

It is found in the cell inner membrane. Its function is as follows. Two distinct, membrane-bound, FAD-containing enzymes are responsible for the catalysis of fumarate and succinate interconversion; fumarate reductase is used in anaerobic growth, and succinate dehydrogenase is used in aerobic growth. Anchors the catalytic components of the fumarate reductase complex to the cell inner membrane, binds quinones. The sequence is that of Fumarate reductase subunit C from Serratia proteamaculans (strain 568).